Reading from the N-terminus, the 759-residue chain is Subtilisin-like protease SBT3.10 (759 aa).

The signal sequence occupies residues 1–25 (MSKTIILLAFFLSIVLNVQISFVVA). A propeptide spans 26-108 (ESKVYVVYLG…VIPNTLYEMT (83 aa)) (activation peptide). Residues 29–106 (VYVVYLGEKE…VQVIPNTLYE (78 aa)) form the Inhibitor I9 domain. Residues 112-606 (TWDYLGVSPG…GGLINPEKAV (495 aa)) form the Peptidase S8 domain. The active-site Charge relay system is Asp142. N-linked (GlcNAc...) asparagine glycans are attached at residues Asn175 and Asn202. His218 serves as the catalytic Charge relay system. N-linked (GlcNAc...) asparagine glycans are attached at residues Asn233 and Asn361. One can recognise a PA domain in the interval 390-464 (DCEKLSANPK…ELGTDILFYI (75 aa)). Ser537 (charge relay system) is an active-site residue.

This sequence belongs to the peptidase S8 family.

The protein resides in the secreted. This chain is Subtilisin-like protease SBT3.10, found in Arabidopsis thaliana (Mouse-ear cress).